A 336-amino-acid polypeptide reads, in one-letter code: Aspartate--ammonia ligase (336 aa).

It belongs to the class-II aminoacyl-tRNA synthetase family. AsnA subfamily.

The protein resides in the cytoplasm. The enzyme catalyses L-aspartate + NH4(+) + ATP = L-asparagine + AMP + diphosphate + H(+). It functions in the pathway amino-acid biosynthesis; L-asparagine biosynthesis; L-asparagine from L-aspartate (ammonia route): step 1/1. The chain is Aspartate--ammonia ligase from Ligilactobacillus salivarius (strain UCC118) (Lactobacillus salivarius).